A 344-amino-acid chain; its full sequence is Ferrochelatase (344 aa).

Positions 214 and 295 each coordinate Fe cation.

This sequence belongs to the ferrochelatase family.

The protein localises to the cytoplasm. It catalyses the reaction heme b + 2 H(+) = protoporphyrin IX + Fe(2+). Its pathway is porphyrin-containing compound metabolism; protoheme biosynthesis; protoheme from protoporphyrin-IX: step 1/1. Functionally, catalyzes the ferrous insertion into protoporphyrin IX. The protein is Ferrochelatase of Rhizobium etli (strain CIAT 652).